A 531-amino-acid polypeptide reads, in one-letter code: UDP-glucuronosyltransferase 1A7 (531 aa).

Positions 1–25 (MAPADFPASLPLCVCLLLASGLAQA) are cleaved as a signal peptide. N-linked (GlcNAc...) asparagine glycosylation is found at Asn293 and Asn431. A helical transmembrane segment spans residues 489–509 (VIGFLLAIVLTVVFIVFKCCA).

The protein belongs to the UDP-glycosyltransferase family. Homodimer. Homooligomer. Interacts with UGT1A1, UGT1A3, UGT1A4, UGT1A6, UGT1A8, UGT1A9 and UGT1A10 to form heterodimers. In terms of tissue distribution, widely expressed with highest levels detected in colon and kidney.

The protein localises to the endoplasmic reticulum membrane. It carries out the reaction glucuronate acceptor + UDP-alpha-D-glucuronate = acceptor beta-D-glucuronoside + UDP + H(+). It catalyses the reaction 17alpha-estradiol + UDP-alpha-D-glucuronate = 17alpha-estradiol 3-O-(beta-D-glucuronate) + UDP + H(+). The enzyme catalyses prunetin + UDP-alpha-D-glucuronate = prunetin-5-O-beta-D-glucuronide + UDP. The catalysed reaction is 5-epi-5-F2t-IsoP + UDP-alpha-D-glucuronate = 5-epi-5-F2t-IsoP-glucuronide + UDP + H(+). It carries out the reaction (E)-ferulate + UDP-alpha-D-glucuronate = (E)-ferulic acid beta-D-glucuronate ester + UDP. It catalyses the reaction candesartan + UDP-alpha-D-glucuronate = candesartan O-beta-D-glucuronoside + UDP. The enzyme catalyses SN-38 + UDP-alpha-D-glucuronate = SN-38 O-beta-D-glucuronide + UDP + H(+). The catalysed reaction is mycophenolate + UDP-alpha-D-glucuronate = mycophenolate 7-O-beta-D-glucuronide + UDP + H(+). Functionally, UDP-glucuronosyltransferase (UGT) that catalyzes phase II biotransformation reactions in which lipophilic substrates are conjugated with glucuronic acid to increase the metabolite's water solubility, thereby facilitating excretion into either the urine or bile. Essential for the elimination and detoxification of drugs, xenobiotics and endogenous compounds. Catalyzes the glucuronidation of endogenous estrogen hormone epiestradiol. Involved in the glucuronidation of F2-isoprostane (5-epi-5-F2t-IsoP). Involved in the glucuronidation of the phytochemical ferulic acid at the carboxylic acid group. Also catalyzes the glucuronidation of the isoflavones genistein, daidzein, glycitein, formononetin, biochanin A and prunetin, which are phytoestrogens with anticancer and cardiovascular properties. Involved in the glucuronidation of the AGTR1 angiotensin receptor antagonist caderastan, a drug which can inhibit the effect of angiotensin II. Involved in the biotransformation of 7-ethyl-10-hydroxycamptothecin (SN-38), the pharmacologically active metabolite of the anticancer drug irinotecan. Also metabolizes mycophenolate, an immunosuppressive agent. In Mus musculus (Mouse), this protein is UDP-glucuronosyltransferase 1A7.